The primary structure comprises 220 residues: Ribosomal RNA small subunit methyltransferase Nep1 (220 aa).

S-adenosyl-L-methionine-binding positions include G178, G183, and 196–201 (IYKEPL).

This sequence belongs to the class IV-like SAM-binding methyltransferase superfamily. RNA methyltransferase NEP1 family. As to quaternary structure, homodimer.

It carries out the reaction a pseudouridine in rRNA + S-adenosyl-L-methionine = an N(1)-methylpseudouridine in rRNA + S-adenosyl-L-homocysteine + H(+). In terms of biological role, methyltransferase involved in ribosomal biogenesis. Specifically catalyzes the N1-methylation of the pseudouridine corresponding to position 914 in M.jannaschii 16S rRNA. This Thermococcus sibiricus (strain DSM 12597 / MM 739) protein is Ribosomal RNA small subunit methyltransferase Nep1.